The chain runs to 441 residues: MTTVTRFAPSPTGYIHVGNLRTALMNWAIARKSGGTFILRLDDTDRERSKQEYSDGIMEDLEWLGLTWDRLERQSDRLDRYAEAADELRRAGRFYECFESPTELDLKRKKLLNMGKPPVYDRAALKLSDEERARLRAERGGYWRFLLDQERIEWTDGILGPISIDAASVSDPVLIRADGQVLYTFASSVDDIDMGVTFIVRGGDHVTNTATQIQIMQALGGTPPSFAHHSLLTGAQGEALSKRLGTLSLRDLRARGVEPMALLSLMARLGSSQPVELFRTHEELLAGFDVSTFGAAPTKFDAEDLFPLTRHYVQGLPFEAVRGRIAALGVPDDLAEPFWRVAKDNIGVLEDLGGWWTLFSEGAEPQIDPEDEDFIRQAMTLLPPPPYGPESWAQFTAAVKEATGRKGKGLFMPLRKALTGQAHGPDMSEVMPLLQKVRAKG.

The 'HIGH' region signature appears at 9 to 19 (PSPTGYIHVGN). A 'KMSKS' region motif is present at residues 239–243 (ALSKR). Lys-242 provides a ligand contact to ATP.

This sequence belongs to the class-I aminoacyl-tRNA synthetase family. Glutamate--tRNA ligase type 1 subfamily. Monomer.

It localises to the cytoplasm. It catalyses the reaction tRNA(Glu) + L-glutamate + ATP = L-glutamyl-tRNA(Glu) + AMP + diphosphate. Catalyzes the attachment of glutamate to tRNA(Glu) in a two-step reaction: glutamate is first activated by ATP to form Glu-AMP and then transferred to the acceptor end of tRNA(Glu). This is Glutamate--tRNA ligase 2 from Cereibacter sphaeroides (strain ATCC 17029 / ATH 2.4.9) (Rhodobacter sphaeroides).